The sequence spans 422 residues: Metallocarboxypeptidase A (422 aa).

The signal sequence occupies residues 1 to 17 (MRSVLSLALLAANVVTA). The propeptide at 18–112 (AVVSPFDYSG…FEAYSAGYAP (95 aa)) is activation peptide. A Peptidase M14 domain is found at 119–419 (SYHSYQDHIS…AGTVAMLKAV (301 aa)). Zn(2+) contacts are provided by H179 and E182. Substrate is bound by residues 179-182 (HARE), R237, and 254-255 (NR). C248 and C271 are joined by a disulfide. Residue H309 coordinates Zn(2+). Position 310 to 311 (310 to 311 (SY)) interacts with substrate. E385 acts as the Proton donor/acceptor in catalysis.

It belongs to the peptidase M14 family. Zn(2+) is required as a cofactor.

The protein resides in the secreted. Functionally, extracellular metalloprotease that contributes to pathogenicity. The sequence is that of Metallocarboxypeptidase A (MCPA) from Trichophyton equinum (Horse ringworm fungus).